The following is a 548-amino-acid chain: Chaperonin GroEL (548 aa).

Residues 30–33, Lys51, 87–91, Gly415, and Asp496 each bind ATP; these read TLGP and DGTTT.

This sequence belongs to the chaperonin (HSP60) family. Forms a cylinder of 14 subunits composed of two heptameric rings stacked back-to-back. Interacts with the co-chaperonin GroES.

It localises to the cytoplasm. The catalysed reaction is ATP + H2O + a folded polypeptide = ADP + phosphate + an unfolded polypeptide.. Together with its co-chaperonin GroES, plays an essential role in assisting protein folding. The GroEL-GroES system forms a nano-cage that allows encapsulation of the non-native substrate proteins and provides a physical environment optimized to promote and accelerate protein folding. The polypeptide is Chaperonin GroEL (Haemophilus influenzae (strain ATCC 51907 / DSM 11121 / KW20 / Rd)).